The following is a 734-amino-acid chain: Predicted GPI-anchored protein 49 (734 aa).

Residues 1-16 (MNYITSLLLLSSNTFL) form the signal peptide. 4 N-linked (GlcNAc...) asparagine glycosylation sites follow: Asn-27, Asn-56, Asn-68, and Asn-71. The interval 78 to 145 (DNSDTDIDDS…NESDTQNEND (68 aa)) is disordered. The span at 87-98 (SSSNSEDVSSND) shows a compositional bias: low complexity. N-linked (GlcNAc...) asparagine glycans are attached at residues Asn-105, Asn-118, Asn-136, and Asn-180. A compositionally biased stretch (acidic residues) spans 110-129 (FSDESDEGNDSDDNGDEVEN). Polar residues predominate over residues 130–141 (MENNQANESDTQ). Disordered stretches follow at residues 216–262 (SPKS…LKSK) and 331–360 (DANP…RLPT). Positions 228–259 (SRKKTLKSKSKSKSSKLKHKSRKSHKRRPKLL) are enriched in basic residues. Asn-388 and Asn-427 each carry an N-linked (GlcNAc...) asparagine glycan. A disordered region spans residues 447–479 (PPRYSNHHSEFTVERPPRPSRTKKRPRIKAKKT). Over residues 453–463 (HHSEFTVERPP) the composition is skewed to basic and acidic residues. Residues 464–479 (RPSRTKKRPRIKAKKT) are compositionally biased toward basic residues. Asn-517 is a glycosylation site (N-linked (GlcNAc...) asparagine). The interval 582-653 (KPQETKLHSP…STTSTKPNDQ (72 aa)) is disordered. Low complexity predominate over residues 592 to 611 (TSTDTKSSKLMSSSSSNNNK). A compositionally biased stretch (polar residues) spans 620–631 (EYNQTQESTSYN). Asn-622 and Asn-631 each carry an N-linked (GlcNAc...) asparagine glycan. Positions 632–650 (TTKAVPKTSVVSSTTSTKP) are enriched in low complexity. Ser-707 is lipidated: GPI-anchor amidated serine. Positions 708-734 (ASQNLSFSVLGLIILLLLLPGLLIIIM) are cleaved as a propeptide — removed in mature form. The N-linked (GlcNAc...) asparagine glycan is linked to Asn-711.

Its subcellular location is the cell membrane. This Candida albicans (strain SC5314 / ATCC MYA-2876) (Yeast) protein is Predicted GPI-anchored protein 49 (PGA49).